We begin with the raw amino-acid sequence, 96 residues long: MKGNEEHDIQKELKRYELFFKKRYKVLYTVNDFIIGAMFLVGSFFFFYDRLMSAGIWLFAIGSLLLLIRPTIRLIHDFHYRKHVEQQFKHQSSTDD.

The next 2 membrane-spanning stretches (helical) occupy residues 27 to 47 and 52 to 72; these read LYTVNDFIIGAMFLVGSFFFF and MSAGIWLFAIGSLLLLIRPTI.

Its subcellular location is the cell membrane. This is an uncharacterized protein from Bacillus subtilis (strain 168).